The sequence spans 156 residues: E3 ubiquitin-protein ligase RNF181 (156 aa).

An RING-type; atypical zinc finger spans residues 79–120 (CPVCLLEFEEGETVRQLPCEHLFHSSCILPWLGKTNSCPLCR).

Belongs to the RNF181 family.

The catalysed reaction is S-ubiquitinyl-[E2 ubiquitin-conjugating enzyme]-L-cysteine + [acceptor protein]-L-lysine = [E2 ubiquitin-conjugating enzyme]-L-cysteine + N(6)-ubiquitinyl-[acceptor protein]-L-lysine.. The protein operates within protein modification; protein ubiquitination. Functionally, E3 ubiquitin-protein ligase which accepts ubiquitin from an E2 ubiquitin-conjugating enzyme in the form of a thioester and then directly transfers the ubiquitin to targeted substrates. Catalyzes monoubiquitination of 26S proteasome subunit PSMC2/RPT1. The sequence is that of E3 ubiquitin-protein ligase RNF181 (rnf181) from Xenopus tropicalis (Western clawed frog).